Here is a 398-residue protein sequence, read N- to C-terminus: Acetate kinase (398 aa).

Asparagine 7 is a binding site for Mg(2+). Lysine 14 provides a ligand contact to ATP. Arginine 91 lines the substrate pocket. The active-site Proton donor/acceptor is the aspartate 148. ATP is bound by residues 208–212, 283–285, and 331–335; these read HLGNG, DSR, and GIGEN. Glutamate 384 is a binding site for Mg(2+).

The protein belongs to the acetokinase family. As to quaternary structure, homodimer. The cofactor is Mg(2+). Requires Mn(2+) as cofactor.

The protein resides in the cytoplasm. The catalysed reaction is acetate + ATP = acetyl phosphate + ADP. Its pathway is metabolic intermediate biosynthesis; acetyl-CoA biosynthesis; acetyl-CoA from acetate: step 1/2. Catalyzes the formation of acetyl phosphate from acetate and ATP. Can also catalyze the reverse reaction. This is Acetate kinase from Halothermothrix orenii (strain H 168 / OCM 544 / DSM 9562).